An 82-amino-acid polypeptide reads, in one-letter code: DNA-directed RNA polymerase subunit Rpo5 (82 aa).

This sequence belongs to the archaeal Rpo5/eukaryotic RPB5 RNA polymerase subunit family. Part of the RNA polymerase complex.

It is found in the cytoplasm. It carries out the reaction RNA(n) + a ribonucleoside 5'-triphosphate = RNA(n+1) + diphosphate. DNA-dependent RNA polymerase (RNAP) catalyzes the transcription of DNA into RNA using the four ribonucleoside triphosphates as substrates. In Thermococcus onnurineus (strain NA1), this protein is DNA-directed RNA polymerase subunit Rpo5.